A 379-amino-acid chain; its full sequence is Succinyl-diaminopimelate desuccinylase (379 aa).

Residue His-70 participates in Zn(2+) binding. Residue Asp-72 is part of the active site. Asp-103 is a binding site for Zn(2+). Glu-137 functions as the Proton acceptor in the catalytic mechanism. The Zn(2+) site is built by Glu-138, Glu-166, and His-352.

This sequence belongs to the peptidase M20A family. DapE subfamily. In terms of assembly, homodimer. The cofactor is Zn(2+). It depends on Co(2+) as a cofactor.

It carries out the reaction N-succinyl-(2S,6S)-2,6-diaminopimelate + H2O = (2S,6S)-2,6-diaminopimelate + succinate. It participates in amino-acid biosynthesis; L-lysine biosynthesis via DAP pathway; LL-2,6-diaminopimelate from (S)-tetrahydrodipicolinate (succinylase route): step 3/3. Its function is as follows. Catalyzes the hydrolysis of N-succinyl-L,L-diaminopimelic acid (SDAP), forming succinate and LL-2,6-diaminopimelate (DAP), an intermediate involved in the bacterial biosynthesis of lysine and meso-diaminopimelic acid, an essential component of bacterial cell walls. The polypeptide is Succinyl-diaminopimelate desuccinylase (Shewanella baltica (strain OS155 / ATCC BAA-1091)).